The following is a 253-amino-acid chain: Ubiquinone/menaquinone biosynthesis C-methyltransferase UbiE (253 aa).

S-adenosyl-L-methionine is bound by residues T76, D97, and 125 to 126 (NA).

This sequence belongs to the class I-like SAM-binding methyltransferase superfamily. MenG/UbiE family.

The catalysed reaction is a 2-demethylmenaquinol + S-adenosyl-L-methionine = a menaquinol + S-adenosyl-L-homocysteine + H(+). It catalyses the reaction a 2-methoxy-6-(all-trans-polyprenyl)benzene-1,4-diol + S-adenosyl-L-methionine = a 5-methoxy-2-methyl-3-(all-trans-polyprenyl)benzene-1,4-diol + S-adenosyl-L-homocysteine + H(+). It participates in quinol/quinone metabolism; menaquinone biosynthesis; menaquinol from 1,4-dihydroxy-2-naphthoate: step 2/2. Its pathway is cofactor biosynthesis; ubiquinone biosynthesis. Functionally, methyltransferase required for the conversion of demethylmenaquinol (DMKH2) to menaquinol (MKH2) and the conversion of 2-polyprenyl-6-methoxy-1,4-benzoquinol (DDMQH2) to 2-polyprenyl-3-methyl-6-methoxy-1,4-benzoquinol (DMQH2). The chain is Ubiquinone/menaquinone biosynthesis C-methyltransferase UbiE from Rhodopseudomonas palustris (strain ATCC BAA-98 / CGA009).